Reading from the N-terminus, the 106-residue chain is 1-deoxy-D-xylulose 5-phosphate reductoisomerase (106 aa).

Aspartate 3 serves as a coordination point for Mn(2+). Residues serine 4, glutamate 5, serine 29, histidine 52, serine 65, asparagine 70, lysine 71, and glutamate 74 each contribute to the 1-deoxy-D-xylulose 5-phosphate site. Glutamate 5 provides a ligand contact to Mn(2+). Glutamate 74 contacts Mn(2+).

This sequence belongs to the DXR family. It depends on Mn(2+) as a cofactor. The cofactor is Mg(2+).

The protein resides in the plastid. It localises to the chloroplast stroma. It carries out the reaction 2-C-methyl-D-erythritol 4-phosphate + NADP(+) = 1-deoxy-D-xylulose 5-phosphate + NADPH + H(+). It functions in the pathway isoprenoid biosynthesis; isopentenyl diphosphate biosynthesis via DXP pathway; isopentenyl diphosphate from 1-deoxy-D-xylulose 5-phosphate: step 1/6. Functionally, enzyme of the plastid non-mevalonate pathway for isoprenoid biosynthesis that catalyzes the NADPH-dependent rearrangement and reduction of 1-deoxy-D-xylulose-5-phosphate (DXP) to 2-C-methyl-D-erythritol 4-phosphate (MEP). Required for chloroplast development. The protein is 1-deoxy-D-xylulose 5-phosphate reductoisomerase of Origanum vulgare (Wild marjoram).